The primary structure comprises 306 residues: Homeobox protein Hox-C13a (306 aa).

The segment at 68–90 is disordered; that stretch reads SVYSDISSPDTGRQCPAPQTSSS. Residues 236–295 constitute a DNA-binding region (homeobox); that stretch reads GRKKRVPYTKLQLKELEKEYAASKFITKDKRRRISAATNLSERQVTIWFQNRRVKEKKFI.

This sequence belongs to the Abd-B homeobox family.

Its subcellular location is the nucleus. Sequence-specific transcription factor which is part of a developmental regulatory system that provides cells with specific positional identities on the anterior-posterior axis. This chain is Homeobox protein Hox-C13a (hoxc13a), found in Takifugu rubripes (Japanese pufferfish).